The sequence spans 379 residues: Elongation factor Ts, mitochondrial (379 aa).

The transit peptide at 1–45 (MALYRTARRPLQMMLFSRLGNPEQNYSSWARKDASQSAFGMFVRL) directs the protein to the mitochondrion.

This sequence belongs to the EF-Ts family.

The protein localises to the mitochondrion. Its function is as follows. Associates with the EF-Tu.GDP complex and induces the exchange of GDP to GTP. It remains bound to the aminoacyl-tRNA.EF-Tu.GTP complex up to the GTP hydrolysis stage on the ribosome. This chain is Elongation factor Ts, mitochondrial, found in Ricinus communis (Castor bean).